The primary structure comprises 35 residues: Cupiennin-2d (35 aa).

The residue at position 35 (Gln35) is a Glutamine amide.

Expressed by the venom gland.

The protein resides in the secreted. The polypeptide is Cupiennin-2d (Cupiennius salei (American wandering spider)).